The primary structure comprises 403 residues: Probable tRNA sulfurtransferase (403 aa).

Residues 60 to 165 (QLAEERLKPI…KEGVFLSCRT (106 aa)) enclose the THUMP domain. ATP is bound by residues 183-184 (ML), 208-209 (HF), Arg265, Gly287, and Gln296.

The protein belongs to the ThiI family.

It is found in the cytoplasm. It carries out the reaction [ThiI sulfur-carrier protein]-S-sulfanyl-L-cysteine + a uridine in tRNA + 2 reduced [2Fe-2S]-[ferredoxin] + ATP + H(+) = [ThiI sulfur-carrier protein]-L-cysteine + a 4-thiouridine in tRNA + 2 oxidized [2Fe-2S]-[ferredoxin] + AMP + diphosphate. The catalysed reaction is [ThiS sulfur-carrier protein]-C-terminal Gly-Gly-AMP + S-sulfanyl-L-cysteinyl-[cysteine desulfurase] + AH2 = [ThiS sulfur-carrier protein]-C-terminal-Gly-aminoethanethioate + L-cysteinyl-[cysteine desulfurase] + A + AMP + 2 H(+). It participates in cofactor biosynthesis; thiamine diphosphate biosynthesis. In terms of biological role, catalyzes the ATP-dependent transfer of a sulfur to tRNA to produce 4-thiouridine in position 8 of tRNAs, which functions as a near-UV photosensor. Also catalyzes the transfer of sulfur to the sulfur carrier protein ThiS, forming ThiS-thiocarboxylate. This is a step in the synthesis of thiazole, in the thiamine biosynthesis pathway. The sulfur is donated as persulfide by IscS. The protein is Probable tRNA sulfurtransferase of Listeria monocytogenes serovar 1/2a (strain ATCC BAA-679 / EGD-e).